The primary structure comprises 853 residues: Aminotransferase PigE (853 aa).

503–504 (GT) contacts pyridoxal 5'-phosphate. At K645 the chain carries N6-(pyridoxal phosphate)lysine. T680 contacts pyridoxal 5'-phosphate.

It belongs to the class-III pyridoxal-phosphate-dependent aminotransferase family. Homodimer. The cofactor is pyridoxal 5'-phosphate.

Its pathway is antibiotic biosynthesis; prodigiosin biosynthesis. Functionally, involved in the biosynthesis of 2-methyl-3-n-amyl-pyrrole (MAP), one of the terminal products involved in the biosynthesis of the red antibiotic prodigiosin (Pig). Catalyzes the transamination to the aldehyde group of 3-acetyloctanal, resulting in an aminoketone, which spontaneously cyclizes to yield the dihydro form of MAP (H2MAP). This Serratia sp. (strain ATCC 39006) (Prodigiosinella confusarubida) protein is Aminotransferase PigE.